The chain runs to 354 residues: Histidinol-phosphate aminotransferase 1 (354 aa).

N6-(pyridoxal phosphate)lysine is present on Lys-209.

It belongs to the class-II pyridoxal-phosphate-dependent aminotransferase family. Histidinol-phosphate aminotransferase subfamily. In terms of assembly, homodimer. Pyridoxal 5'-phosphate is required as a cofactor.

It carries out the reaction L-histidinol phosphate + 2-oxoglutarate = 3-(imidazol-4-yl)-2-oxopropyl phosphate + L-glutamate. It functions in the pathway amino-acid biosynthesis; L-histidine biosynthesis; L-histidine from 5-phospho-alpha-D-ribose 1-diphosphate: step 7/9. The sequence is that of Histidinol-phosphate aminotransferase 1 (hisC1) from Oceanobacillus iheyensis (strain DSM 14371 / CIP 107618 / JCM 11309 / KCTC 3954 / HTE831).